The following is a 364-amino-acid chain: Sorbitol dehydrogenase (364 aa).

Residue Cys-54 participates in Zn(2+) binding. Residue Tyr-60 coordinates substrate. Residues His-79 and Glu-80 each contribute to the Zn(2+) site. Glu-165 is a binding site for substrate. NAD(+) contacts are provided by residues Ile-193, Asp-213, Arg-218, 284–286 (VGM), and 308–310 (VFR). Positions 310 and 311 each coordinate substrate.

Belongs to the zinc-containing alcohol dehydrogenase family. As to quaternary structure, homotetramer. Zn(2+) is required as a cofactor. In terms of tissue distribution, mostly expressed in dry seeds and leaves, and, to a lower extent, in roots, stems, flowers and siliques (at protein level).

The protein localises to the mitochondrion membrane. It is found in the cell membrane. The protein resides in the cytoplasm. It localises to the cytosol. It catalyses the reaction keto-D-fructose + NADH + H(+) = D-sorbitol + NAD(+). It carries out the reaction ribitol + NAD(+) = D-ribulose + NADH + H(+). The enzyme catalyses xylitol + NAD(+) = D-xylulose + NADH + H(+). Functionally, polyol dehydrogenase that catalyzes the NAD(+)-dependent oxidation of various sugar alcohols. Is mostly active with D-sorbitol (D-glucitol), ribitol and xylitol as substrates, leading to the C2-oxidized products D-fructose, D-ribulose and D-xylulose, respectively. To a lesser extent, can also oxidize arabitol, mannitol, lactitol and maltitol in vitro. Is required for sorbitol metabolism. Cannot use NADP(+) as the electron acceptor. The chain is Sorbitol dehydrogenase (SDH) from Arabidopsis thaliana (Mouse-ear cress).